We begin with the raw amino-acid sequence, 144 residues long: Large ribosomal subunit protein uL16 (144 aa).

The protein belongs to the universal ribosomal protein uL16 family. As to quaternary structure, part of the 50S ribosomal subunit.

Functionally, binds 23S rRNA and is also seen to make contacts with the A and possibly P site tRNAs. The protein is Large ribosomal subunit protein uL16 of Ligilactobacillus salivarius (strain UCC118) (Lactobacillus salivarius).